We begin with the raw amino-acid sequence, 261 residues long: Cytochrome c oxidase subunit 3 (261 aa).

Residues 1–15 (MAHQAHAYHMVDPSP) are Mitochondrial matrix-facing. The chain crosses the membrane as a helical span at residues 16-34 (WPLTGAIAALLLTSGTAVW). The Mitochondrial intermembrane portion of the chain corresponds to 35–40 (FHFHSL). The chain crosses the membrane as a helical span at residues 41–66 (TLLTLGNILLLLTMYQWWRDIIREGT). Topologically, residues 67-72 (FQGHHT) are mitochondrial matrix. A helical membrane pass occupies residues 73–105 (PPVQKGLRYGMILFITSEVFFFLGFFWAFYHAS). Residues 106 to 128 (LAPTPELGGCWPPTGITTLDPFE) lie on the Mitochondrial intermembrane side of the membrane. Residues 129 to 152 (VPLLNTAVLLASGVTVTWAHHSIM) form a helical membrane-spanning segment. Residues 153 to 155 (EGE) lie on the Mitochondrial matrix side of the membrane. A helical transmembrane segment spans residues 156-183 (RKQTIQALTLTILLGFYFTFLQGMEYYE). At 184-190 (APFTIAD) the chain is on the mitochondrial intermembrane side. The helical transmembrane segment at 191–223 (GVYGSTFFVATGFHGLHVIIGSTFLAVCLLRQV) threads the bilayer. Residues 224 to 232 (QYHFTSEHH) are Mitochondrial matrix-facing. Residues 233 to 256 (FGFEAAAWYWHFVDVVWLFLYVSI) form a helical membrane-spanning segment. The Mitochondrial intermembrane segment spans residues 257–261 (YWWGS).

This sequence belongs to the cytochrome c oxidase subunit 3 family. In terms of assembly, component of the cytochrome c oxidase (complex IV, CIV), a multisubunit enzyme composed of 14 subunits. The complex is composed of a catalytic core of 3 subunits MT-CO1, MT-CO2 and MT-CO3, encoded in the mitochondrial DNA, and 11 supernumerary subunits COX4I, COX5A, COX5B, COX6A, COX6B, COX6C, COX7A, COX7B, COX7C, COX8 and NDUFA4, which are encoded in the nuclear genome. The complex exists as a monomer or a dimer and forms supercomplexes (SCs) in the inner mitochondrial membrane with NADH-ubiquinone oxidoreductase (complex I, CI) and ubiquinol-cytochrome c oxidoreductase (cytochrome b-c1 complex, complex III, CIII), resulting in different assemblies (supercomplex SCI(1)III(2)IV(1) and megacomplex MCI(2)III(2)IV(2)).

The protein resides in the mitochondrion inner membrane. It catalyses the reaction 4 Fe(II)-[cytochrome c] + O2 + 8 H(+)(in) = 4 Fe(III)-[cytochrome c] + 2 H2O + 4 H(+)(out). Component of the cytochrome c oxidase, the last enzyme in the mitochondrial electron transport chain which drives oxidative phosphorylation. The respiratory chain contains 3 multisubunit complexes succinate dehydrogenase (complex II, CII), ubiquinol-cytochrome c oxidoreductase (cytochrome b-c1 complex, complex III, CIII) and cytochrome c oxidase (complex IV, CIV), that cooperate to transfer electrons derived from NADH and succinate to molecular oxygen, creating an electrochemical gradient over the inner membrane that drives transmembrane transport and the ATP synthase. Cytochrome c oxidase is the component of the respiratory chain that catalyzes the reduction of oxygen to water. Electrons originating from reduced cytochrome c in the intermembrane space (IMS) are transferred via the dinuclear copper A center (CU(A)) of subunit 2 and heme A of subunit 1 to the active site in subunit 1, a binuclear center (BNC) formed by heme A3 and copper B (CU(B)). The BNC reduces molecular oxygen to 2 water molecules using 4 electrons from cytochrome c in the IMS and 4 protons from the mitochondrial matrix. This Oncorhynchus clarkii (Cutthroat trout) protein is Cytochrome c oxidase subunit 3 (mt-co3).